A 317-amino-acid chain; its full sequence is Lipoyl synthase (317 aa).

Residues 1 to 28 form a disordered region; sequence MDSQPQSKKAARGADKTARNPIPIIPAP. The [4Fe-4S] cluster site is built by Cys64, Cys69, Cys75, Cys90, Cys94, Cys97, and Ser304. One can recognise a Radical SAM core domain in the interval 76-293; it reads FGGGTATFMI…QRDGMAMGFR (218 aa).

It belongs to the radical SAM superfamily. Lipoyl synthase family. The cofactor is [4Fe-4S] cluster.

Its subcellular location is the cytoplasm. The enzyme catalyses [[Fe-S] cluster scaffold protein carrying a second [4Fe-4S](2+) cluster] + N(6)-octanoyl-L-lysyl-[protein] + 2 oxidized [2Fe-2S]-[ferredoxin] + 2 S-adenosyl-L-methionine + 4 H(+) = [[Fe-S] cluster scaffold protein] + N(6)-[(R)-dihydrolipoyl]-L-lysyl-[protein] + 4 Fe(3+) + 2 hydrogen sulfide + 2 5'-deoxyadenosine + 2 L-methionine + 2 reduced [2Fe-2S]-[ferredoxin]. Its pathway is protein modification; protein lipoylation via endogenous pathway; protein N(6)-(lipoyl)lysine from octanoyl-[acyl-carrier-protein]: step 2/2. Its function is as follows. Catalyzes the radical-mediated insertion of two sulfur atoms into the C-6 and C-8 positions of the octanoyl moiety bound to the lipoyl domains of lipoate-dependent enzymes, thereby converting the octanoylated domains into lipoylated derivatives. This Acidithiobacillus ferrooxidans (strain ATCC 23270 / DSM 14882 / CIP 104768 / NCIMB 8455) (Ferrobacillus ferrooxidans (strain ATCC 23270)) protein is Lipoyl synthase.